The following is a 313-amino-acid chain: uncharacterized protein (313 aa).

An N-terminal signal peptide occupies residues 1 to 24; it reads MKRRRRWRGWLLFLALCFCLLCEA. 14 N-linked (GlcNAc...) asparagine; by host glycosylation sites follow: Asn28, Asn43, Asn57, Asn77, Asn101, Asn102, Asn109, Asn149, Asn168, Asn215, Asn222, Asn251, Asn254, and Asn267. Residues 47–73 form a disordered region; sequence ATTGTTTTSPNVTSTTSNTVTTPTTVS. The segment covering 90-114 has biased composition (low complexity); that stretch reads STVSGTRNTRNNNTTTIGTNATSPS. The disordered stretch occupies residues 90–117; that stretch reads STVSGTRNTRNNNTTTIGTNATSPSSSV.

It belongs to the HHV-5 US34A protein family.

This is an uncharacterized protein from Homo sapiens (Human).